Here is a 512-residue protein sequence, read N- to C-terminus: Cercosporin MFS transporter CTB4 (512 aa).

12 helical membrane-spanning segments follow: residues 72-92 (WVITMSLALYALSTTFSSSVF), 110-130 (VVLGCTSLFMVGFATGPIFWG), 142-162 (LLAGYLGFAVLQLPIADARSL), 170-190 (FLGGFFGAAPSSILSGILADI), 202-222 (TVGAFLTIGPILGPLIGSVLV), 230-250 (WIANVVAIASFLIALSTFPFL), 306-326 (ILLMMTLYVSVSFGLLYNFFL), 343-363 (ASLPLISILVGAIIAGALLSF), 383-403 (LLLMMVGAVSLPAGMFLFAWT), 407-427 (TMNPWPQILSGIPTGFGIHLI), 456-476 (LFAAGFPILATSMYAAIGVKW), and 480-500 (ILALLAVAMIPIPILFYYFGA).

Belongs to the major facilitator superfamily. CAR1 family.

Its subcellular location is the cell membrane. In terms of biological role, MFS transporter; part of the gene cluster that mediates the biosynthesis of cercosporin, a light-activated, non-host-selective toxin. The perylenequinone chromophore of cercosporin absorbs light energy to attain an electronically-activated triplet state and produces active oxygen species such as the hydroxyl radical, superoxide, hydrogen peroxide or singlet oxygen upon reaction with oxygen molecules. These reactive oxygen species cause damage to various cellular components including lipids, proteins and nucleic acids. Responsible for secretion and accumulation of cercosporin, but does not play any roles in self-protection against the toxicity of cercosporin. The protein is Cercosporin MFS transporter CTB4 of Cercospora nicotianae (Barn spot disease fungus).